Consider the following 359-residue polypeptide: MKALILVGGFGTRLRPLTLSKPKPIVEFANKAMILHQIEALCKIGVNEVVLAVNYRPQLMSQYLEPYEKKLGIKISYSHETVPLGTAGPLALARDLLNDGEPFFVLNSDIICDFPFADLLAFHKSHGGEGTIMVTKVEEPSKYGVVVYKEENGQILKFVEKPQVYVGNKINAGVYIFNPTILDRIQPKPTSIEKEIFPAMAADSQLYCMQLEGFWMDVGQPKDFLSGMGLYLNSLKSKQPELLATGNGIIGPVLIDPSSVIEPGCLIGPNVTIGPNCVIQEGTRLVNTTVLEGTTIGKNSWIKSTIIGWNSSIGKWVRMENTSVLGEDVHVSDELYINGGKILPHKSITSSIPEPEIIM.

The interval 2-221 is substrate-binding domain; that stretch reads KALILVGGFG…EGFWMDVGQP (220 aa). Asp-109 is a GDP-alpha-D-mannose binding site. Asp-109 contacts Mg(2+). Lys-161 is a catalytic residue. Position 217 (Asp-217) interacts with GDP-alpha-D-mannose. Residue Asp-217 participates in Mg(2+) binding. Residues 244 to 359 are hexapeptide repeat domain; sequence ATGNGIIGPV…SSIPEPEIIM (116 aa).

Belongs to the transferase hexapeptide repeat family. Component of the GMPPA-GMPPB mannose-1-phosphate guanylyltransferase complex composed of 4 GMPPA subunits and 8 gmppB subunits; the complex is organized into three layers, a central layer made up of 2 gmppA dimers sandwiched between two layers each made up of 2 gmppB dimers. gmppB catalytic activity is reduced when part of the complex and binding of GDP-alpha-D-Mannose by gmppA induces allosteric feedback inhibition of gmppB. Requires Mg(2+) as cofactor.

The enzyme catalyses alpha-D-mannose 1-phosphate + GTP + H(+) = GDP-alpha-D-mannose + diphosphate. The protein operates within nucleotide-sugar biosynthesis; GDP-alpha-D-mannose biosynthesis; GDP-alpha-D-mannose from alpha-D-mannose 1-phosphate (GTP route): step 1/1. Enzyme activity is reduced by incorporation into the GMPPA-GMPPB mannose-1-phosphate guanylyltransferase complex. Allosterically inhibited, when part of the GMPPA-GMPPB complex, by GDP-alpha-D-mannose binding to GMPPA. Catalytic subunit of the GMPPA-GMPPB mannose-1-phosphate guanylyltransferase complex. Catalyzes the formation of GDP-mannose, an essential precursor of glycan moieties of glycoproteins and glycolipids. Can catalyze the reverse reaction in vitro. Together with GMPPA regulates GDP-alpha-D-mannose levels. The chain is Mannose-1-phosphate guanylyltransferase catalytic subunit beta (gmppB) from Dictyostelium discoideum (Social amoeba).